Reading from the N-terminus, the 522-residue chain is 2-isopropylmalate synthase (522 aa).

In terms of domain architecture, Pyruvate carboxyltransferase spans 5-267 (VIIFDTTLRD…ETGINAKEIH (263 aa)). Residues Asp14, His202, His204, and Asn238 each contribute to the Mn(2+) site. Residues 392–522 (QLQQLVVQSD…MHKNRELGGV (131 aa)) form a regulatory domain region.

It belongs to the alpha-IPM synthase/homocitrate synthase family. LeuA type 1 subfamily. In terms of assembly, homodimer. The cofactor is Mn(2+).

The protein resides in the cytoplasm. It carries out the reaction 3-methyl-2-oxobutanoate + acetyl-CoA + H2O = (2S)-2-isopropylmalate + CoA + H(+). Its pathway is amino-acid biosynthesis; L-leucine biosynthesis; L-leucine from 3-methyl-2-oxobutanoate: step 1/4. In terms of biological role, catalyzes the condensation of the acetyl group of acetyl-CoA with 3-methyl-2-oxobutanoate (2-ketoisovalerate) to form 3-carboxy-3-hydroxy-4-methylpentanoate (2-isopropylmalate). This chain is 2-isopropylmalate synthase, found in Shewanella sp. (strain MR-4).